Here is a 385-residue protein sequence, read N- to C-terminus: MSAPTVPGAGIGLDDLPLRANLRGKKPYGAPQLTVPVQLNTNENPHPPSKALVDDVAESIRAVAAELHRYPDRDAVALRADLAAYLTRQTGIAVDTANVWAANGSNEILQQLLQAFGGPGRRALGFVPSYSMHPIISEGIDTEWVEARRNADFSLDIDHAVATIAERRPDVVFVTSPNNPTGHSIPGADLARILDAAPGIVVVDEAYAEFSAQPSAIGLIDRYPAKLVVSRTMSKAFAFAGGRLGYLVAAPAVIDALLLVRLPYHLSVVTQAAARAALRHADETLASVAELAAQRDRVAAELAASGFRVVPSDANFLLFGRFADAPRAWQRYLDHGVLIRDVGIPGHLRATIGLAAENDEFLRVSRLLAADELINDESDESTGTP.

K235 is subject to N6-(pyridoxal phosphate)lysine.

This sequence belongs to the class-II pyridoxal-phosphate-dependent aminotransferase family. Histidinol-phosphate aminotransferase subfamily. In terms of assembly, homodimer. It depends on pyridoxal 5'-phosphate as a cofactor.

It catalyses the reaction L-histidinol phosphate + 2-oxoglutarate = 3-(imidazol-4-yl)-2-oxopropyl phosphate + L-glutamate. Its pathway is amino-acid biosynthesis; L-histidine biosynthesis; L-histidine from 5-phospho-alpha-D-ribose 1-diphosphate: step 7/9. The protein is Histidinol-phosphate aminotransferase of Nocardia farcinica (strain IFM 10152).